A 158-amino-acid chain; its full sequence is 2-C-methyl-D-erythritol 2,4-cyclodiphosphate synthase (158 aa).

Positions 9 and 11 each coordinate a divalent metal cation. 4-CDP-2-C-methyl-D-erythritol 2-phosphate is bound by residues 9–11 and 35–36; these read DVH and HS. Residue His-43 participates in a divalent metal cation binding. 4-CDP-2-C-methyl-D-erythritol 2-phosphate is bound by residues 57 to 59, 62 to 66, 133 to 136, Phe-140, and Arg-143; these read DIG, FPDTD, and TTSE.

Belongs to the IspF family. In terms of assembly, homotrimer. A divalent metal cation is required as a cofactor.

It catalyses the reaction 4-CDP-2-C-methyl-D-erythritol 2-phosphate = 2-C-methyl-D-erythritol 2,4-cyclic diphosphate + CMP. It participates in isoprenoid biosynthesis; isopentenyl diphosphate biosynthesis via DXP pathway; isopentenyl diphosphate from 1-deoxy-D-xylulose 5-phosphate: step 4/6. Involved in the biosynthesis of isopentenyl diphosphate (IPP) and dimethylallyl diphosphate (DMAPP), two major building blocks of isoprenoid compounds. Catalyzes the conversion of 4-diphosphocytidyl-2-C-methyl-D-erythritol 2-phosphate (CDP-ME2P) to 2-C-methyl-D-erythritol 2,4-cyclodiphosphate (ME-CPP) with a corresponding release of cytidine 5-monophosphate (CMP). In Pasteurella multocida (strain Pm70), this protein is 2-C-methyl-D-erythritol 2,4-cyclodiphosphate synthase.